A 914-amino-acid polypeptide reads, in one-letter code: Alanine--tRNA ligase (914 aa).

Zn(2+) is bound by residues His-613, His-617, Cys-717, and His-721.

This sequence belongs to the class-II aminoacyl-tRNA synthetase family. It depends on Zn(2+) as a cofactor.

The protein resides in the cytoplasm. The catalysed reaction is tRNA(Ala) + L-alanine + ATP = L-alanyl-tRNA(Ala) + AMP + diphosphate. In terms of biological role, catalyzes the attachment of alanine to tRNA(Ala) in a two-step reaction: alanine is first activated by ATP to form Ala-AMP and then transferred to the acceptor end of tRNA(Ala). Also edits incorrectly charged Ser-tRNA(Ala) and Gly-tRNA(Ala) via its editing domain. The chain is Alanine--tRNA ligase from Pyrococcus furiosus (strain ATCC 43587 / DSM 3638 / JCM 8422 / Vc1).